The chain runs to 196 residues: Molybdopterin synthase catalytic subunit (196 aa).

Residues 1 to 29 (MSTLPSTDPPPLPASTSSQQPAVHIPPPS) are disordered. Substrate contacts are provided by residues 145 to 146 (HR), Lys-161, and 168 to 170 (KRE). The tract at residues 174-196 (GEPPGQGEWRANRDTDPEGKSTS) is disordered. A compositionally biased stretch (basic and acidic residues) spans 183-196 (RANRDTDPEGKSTS).

The protein belongs to the MoaE family. MOCS2B subfamily. As to quaternary structure, heterotetramer; composed of 2 small (MOCS2A) and 2 large (MOCS2B) subunits.

The protein localises to the cytoplasm. It catalyses the reaction 2 [molybdopterin-synthase sulfur-carrier protein]-C-terminal-Gly-aminoethanethioate + cyclic pyranopterin phosphate + H2O = molybdopterin + 2 [molybdopterin-synthase sulfur-carrier protein]-C-terminal Gly-Gly + 2 H(+). It participates in cofactor biosynthesis; molybdopterin biosynthesis. In terms of biological role, catalytic subunit of the molybdopterin synthase complex, a complex that catalyzes the conversion of precursor Z into molybdopterin. Acts by mediating the incorporation of 2 sulfur atoms from thiocarboxylated MOCS2A into precursor Z to generate a dithiolene group. The polypeptide is Molybdopterin synthase catalytic subunit (Coccidioides immitis (strain RS) (Valley fever fungus)).